A 369-amino-acid chain; its full sequence is 4-hydroxy-3-methylbut-2-en-1-yl diphosphate synthase (flavodoxin) (369 aa).

Residues Cys270, Cys273, Cys305, and Glu312 each contribute to the [4Fe-4S] cluster site.

The protein belongs to the IspG family. [4Fe-4S] cluster is required as a cofactor.

The catalysed reaction is (2E)-4-hydroxy-3-methylbut-2-enyl diphosphate + oxidized [flavodoxin] + H2O + 2 H(+) = 2-C-methyl-D-erythritol 2,4-cyclic diphosphate + reduced [flavodoxin]. The protein operates within isoprenoid biosynthesis; isopentenyl diphosphate biosynthesis via DXP pathway; isopentenyl diphosphate from 1-deoxy-D-xylulose 5-phosphate: step 5/6. Converts 2C-methyl-D-erythritol 2,4-cyclodiphosphate (ME-2,4cPP) into 1-hydroxy-2-methyl-2-(E)-butenyl 4-diphosphate. The sequence is that of 4-hydroxy-3-methylbut-2-en-1-yl diphosphate synthase (flavodoxin) from Pseudomonas syringae pv. syringae (strain B728a).